Consider the following 256-residue polypeptide: Thiazole synthase (256 aa).

Residue Lys99 is the Schiff-base intermediate with DXP of the active site. Residues Gly160, 186–187 (AG), and 208–209 (NT) each bind 1-deoxy-D-xylulose 5-phosphate.

It belongs to the ThiG family. In terms of assembly, homotetramer. Forms heterodimers with either ThiH or ThiS.

The protein resides in the cytoplasm. It catalyses the reaction [ThiS sulfur-carrier protein]-C-terminal-Gly-aminoethanethioate + 2-iminoacetate + 1-deoxy-D-xylulose 5-phosphate = [ThiS sulfur-carrier protein]-C-terminal Gly-Gly + 2-[(2R,5Z)-2-carboxy-4-methylthiazol-5(2H)-ylidene]ethyl phosphate + 2 H2O + H(+). It functions in the pathway cofactor biosynthesis; thiamine diphosphate biosynthesis. Its function is as follows. Catalyzes the rearrangement of 1-deoxy-D-xylulose 5-phosphate (DXP) to produce the thiazole phosphate moiety of thiamine. Sulfur is provided by the thiocarboxylate moiety of the carrier protein ThiS. In vitro, sulfur can be provided by H(2)S. The polypeptide is Thiazole synthase (Neorickettsia sennetsu (strain ATCC VR-367 / Miyayama) (Ehrlichia sennetsu)).